The chain runs to 193 residues: Intracellular heme transport protein HutX (193 aa).

Position 116 (Tyr-116) interacts with heme.

As to quaternary structure, homodimer. Interacts with HutZ.

The protein resides in the cytoplasm. In terms of biological role, binds heme. Heme is transferred to the heme-degrading enzyme HutZ via a specific protein-protein interaction. The polypeptide is Intracellular heme transport protein HutX (Vibrio cholerae serotype O1 (strain ATCC 39315 / El Tor Inaba N16961)).